The following is a 309-amino-acid chain: Ornithine carbamoyltransferase (309 aa).

Carbamoyl phosphate is bound by residues 57-60 (STRT), Q84, R108, and 135-138 (HPCQ). Residues N166, D226, and 230-231 (SM) each bind L-ornithine. Residues 265-266 (CL) and R293 each bind carbamoyl phosphate.

The protein belongs to the aspartate/ornithine carbamoyltransferase superfamily. OTCase family.

The protein localises to the cytoplasm. The enzyme catalyses carbamoyl phosphate + L-ornithine = L-citrulline + phosphate + H(+). Its pathway is amino-acid biosynthesis; L-arginine biosynthesis; L-arginine from L-ornithine and carbamoyl phosphate: step 1/3. In terms of biological role, reversibly catalyzes the transfer of the carbamoyl group from carbamoyl phosphate (CP) to the N(epsilon) atom of ornithine (ORN) to produce L-citrulline. This chain is Ornithine carbamoyltransferase, found in Rhizorhabdus wittichii (strain DSM 6014 / CCUG 31198 / JCM 15750 / NBRC 105917 / EY 4224 / RW1) (Sphingomonas wittichii).